The primary structure comprises 199 residues: dITP/XTP pyrophosphatase (199 aa).

8 to 13 is a substrate binding site; sequence THNRNK. Residue D68 is the Proton acceptor of the active site. D68 contributes to the Mg(2+) binding site. Substrate-binding positions include S69, 151-154, K174, and 179-180; these read HGYD and HR.

This sequence belongs to the HAM1 NTPase family. Homodimer. The cofactor is Mg(2+).

The catalysed reaction is XTP + H2O = XMP + diphosphate + H(+). It carries out the reaction dITP + H2O = dIMP + diphosphate + H(+). The enzyme catalyses ITP + H2O = IMP + diphosphate + H(+). Its function is as follows. Pyrophosphatase that catalyzes the hydrolysis of nucleoside triphosphates to their monophosphate derivatives, with a high preference for the non-canonical purine nucleotides XTP (xanthosine triphosphate), dITP (deoxyinosine triphosphate) and ITP. Seems to function as a house-cleaning enzyme that removes non-canonical purine nucleotides from the nucleotide pool, thus preventing their incorporation into DNA/RNA and avoiding chromosomal lesions. The protein is dITP/XTP pyrophosphatase of Leifsonia xyli subsp. xyli (strain CTCB07).